The chain runs to 133 residues: Salivary cystatin-L (133 aa).

A signal peptide spans 1–19 (MTSSFALVLLLGGVAVCVA). A Cystatin domain is found at 30 to 117 (ANHQANPEFL…HRTCTTVVFE (88 aa)). Cystine bridges form between C89–C100 and C111–C130.

Belongs to the cystatin family. As to quaternary structure, monomer. Can form homodimers in vitro, but probably not in vivo. Homodimers are predicted to be inactive; dimerization disrupts the interaction with target proteases.

Its subcellular location is the secreted. Functionally, inhibitor of cysteine proteinases. Inhibits host immune responses via its inhibition of host cathepsins. Contributes to the suppression of the host's immune response to tick salivary proteins and is important for successful feeding on hosts. Inhibits differentiation of host dendritic cells. Inhibits proliferation of host T-cells in response to antigen stimulus. Down-regulates TLR2-mediated host responses to infection by B.burgdorferi and the production of the chemokine CCL3 by host dendritic cells. Down-regulates host responses to infection by B.burgdorferi and the production of IFNB1 by host dendritic cells. Down-regulates IL1B production by host mast cells, and this then leads to impaired activation of IL1R1, resulting in decreased IL9 production. Inhibits host inflammatory reactions and recruitment of host neutrophils. Inhibits papain and cathepsin L (CTSL) (in vitro). Inhibits cathepsin S (CTSS) (in vitro). Inhibits CTSV and CTSC, but to a lesser degree (in vitro). This is Salivary cystatin-L from Ixodes scapularis (Black-legged tick).